The chain runs to 228 residues: Vacuolar-sorting protein snf7 (228 aa).

Coiled coils occupy residues 25 to 94 (ILGL…QINA) and 125 to 226 (EKVD…QAEM).

This sequence belongs to the SNF7 family. A component of the endosomal sorting required for transport complex III (ESCRT-III).

The protein resides in the cytoplasm. It is found in the endosome membrane. Functionally, required for the sorting and concentration of proteins resulting in the entry of these proteins into the invaginating vesicles of the multivesicular body (MVB). Also required for the proteolytic cleavage of the transcription factor pacc-1 in response to alkaline ambient pH. The sequence is that of Vacuolar-sorting protein snf7 (vsp-3) from Neurospora crassa (strain ATCC 24698 / 74-OR23-1A / CBS 708.71 / DSM 1257 / FGSC 987).